We begin with the raw amino-acid sequence, 37 residues long: Large ribosomal subunit protein bL36 (37 aa).

Belongs to the bacterial ribosomal protein bL36 family.

The protein is Large ribosomal subunit protein bL36 of Streptomyces griseus subsp. griseus (strain JCM 4626 / CBS 651.72 / NBRC 13350 / KCC S-0626 / ISP 5235).